Reading from the N-terminus, the 331-residue chain is Ribosomal RNA small subunit methyltransferase C (331 aa).

It belongs to the methyltransferase superfamily. RsmC family. Monomer.

It is found in the cytoplasm. The enzyme catalyses guanosine(1207) in 16S rRNA + S-adenosyl-L-methionine = N(2)-methylguanosine(1207) in 16S rRNA + S-adenosyl-L-homocysteine + H(+). Its function is as follows. Specifically methylates the guanine in position 1207 of 16S rRNA in the 30S particle. The chain is Ribosomal RNA small subunit methyltransferase C from Ectopseudomonas mendocina (strain ymp) (Pseudomonas mendocina).